The following is a 455-amino-acid chain: T-box protein VegT-A (455 aa).

Disordered regions lie at residues 21 to 40 (SNCA…SSQD), 229 to 262 (REQE…DSPE), and 295 to 346 (ANQG…EPSS). Positions 57-230 (LWSQFHQEGT…HNPFAKGFRE (174 aa)) form a DNA-binding region, T-box. A compositionally biased stretch (basic and acidic residues) spans 229–241 (REQERSHKRDDVL). Positions 308 to 324 (GANQEQQVPTSSSNFYN) are enriched in polar residues.

In terms of assembly, forms a repression complex on the promoters of the nodal/nr1 and siamois genes with the maternal factors tcf7l1/tcf3 and pouf5.1/oct-25. Interacts (via C-terminus) with tcf7l1/tcf3 (via N-terminus). Also interacts with the other POU-domain transcription factors pou5f1.2/oct-91 and pou5f1.3/oct-60. As to expression, uniformly distributed in stage I oocytes but becomes localized to the vegetal hemisphere by stage II and remains so thereafter throughout oogenesis and the early embryonic cleavage stages. Zygotic expression parallels blastopore formation and shifts from dorsal expression in the marginal zone of late blastula and early gastrula stages to a ventral/lateral expression at the posterior end of later stage embryos. Expression is excluded from the notochord. In tailbud and tadpole stages, expressed exclusively in a subset of posterior Rohon-Beard neurons.

Its subcellular location is the nucleus. Functionally, transcription factor required for both mesoderm and endoderm formation in the embryo; signaling determinants and concentration levels may determine which germ layer is formed. Acts together with beta-catenin to activate genes that are responsible for mesoderm induction including wnt-8, eomes t/bra, siamois, mix1 and sox17. Directly binds to promoter DNA. Patterns the mesoderm along the dorsoventral and posterior axis. Activates siamois gene transcription when alone or in combination with beta-catenin, but inhibits siamois transcription in combination with pou5f1.1/oct-25. In Xenopus laevis (African clawed frog), this protein is T-box protein VegT-A (vegt-a).